Consider the following 731-residue polypeptide: Two pore channel protein 2 (731 aa).

The Cytoplasmic portion of the chain corresponds to 1–68 (MAAEEQPLLG…RWYYSNVCQR (68 aa)). A helical membrane pass occupies residues 69–89 (VLGFIIFLILILAFVEVPSSF). Residues 90–111 (TKTADVRYRSQPWQPPCGLTET) lie on the Extracellular side of the membrane. A helical transmembrane segment spans residues 112 to 132 (IEAFCLLAFLVDLSVKGYLVG). Topologically, residues 133-139 (QAQLQQN) are cytoplasmic. The chain crosses the membrane as a helical span at residues 140–160 (LWLLAYFMVLVVSVVDWIVSL). Over 161–167 (SLACEEP) the chain is Extracellular. The chain crosses the membrane as a helical span at residues 168-188 (LRMRRLLRPFFLLQNSSMMKK). Residues 187–191 (KKTLK) form an interaction with phosphatidylinositol 3,5-bisphosphate region. Over 189-203 (TLKCIRWSLPEMASV) the chain is Cytoplasmic. Residues 204–224 (GLLLAIHLCLFTIIGMLLFTI) form a helical membrane-spanning segment. At 225–238 (GEKDEAQDQERLAY) the chain is on the extracellular side. Residues 239-263 (FRNLPEALTSLLVLLTTSNNPDVMI) constitute an intramembrane region (helical; Pore-forming). Topologically, residues 264–270 (PAYTQNR) are extracellular. Residues 271-291 (AFALFFIVFTLIGSLFLMNLL) form a helical membrane-spanning segment. At 292–417 (TAIIYNQFRG…TAQFIFSHHY (126 aa)) the chain is on the cytoplasmic side. The chain crosses the membrane as a helical span at residues 418 to 438 (FDYLGNLVALGNLLSICVFLV). Over 439–449 (LDSDLLPGERD) the chain is Extracellular. Residues 450–470 (DFVLGILDYIFILYYLLELLF) traverse the membrane as a helical segment. Topologically, residues 471 to 486 (KVFALGLPGYLSYHSN) are cytoplasmic. The helical transmembrane segment at 487-507 (VFDGLLTIILLVSEICTLAVY) threads the bilayer. Residues 508-524 (RLPHSGWKPEQYGPLSL) are Extracellular-facing. The chain crosses the membrane as a helical span at residues 525-542 (WDMTRLMNTLIVFRFLRI). At 543–564 (IPNIKPMAEVANTILGLIPNLR) the chain is on the cytoplasmic side. The chain crosses the membrane as a helical span at residues 565-585 (AFGGILVVAYYVFAMIGINLF). Residues 586-618 (RGVIVPPGNSSLVPDNNSAVCGSFEQLGYWPNN) lie on the Extracellular side of the membrane. Asn-594 and Asn-601 each carry an N-linked (GlcNAc...) asparagine glycan. An intramembrane region (helical; Pore-forming) is located at residues 619 to 641 (FDDFAAALITLWNVMVVNNWQVI). Over 642–656 (LEAYKRYAGPWSMVY) the chain is Extracellular. Residues 657–677 (FVLWWLVSSVIWINLFLALLL) traverse the membrane as a helical segment. Topologically, residues 678 to 731 (ENFLHRWDPQGHKQLLVGTKQMSVELMFRDILEEPKEEELMEKLHKHPHLHLCR) are cytoplasmic.

Belongs to the calcium channel alpha-1 subunit (TC 1.A.1.11) family. Two pore calcium channel subfamily. Homodimer. Interacts with LRRK2. Interacts with HAX1. Interacts with MTOR; the interaction is required for TPCN2 ATP sensitivity. Found in a complex with LSM12, TPCN1 and TPCN2. Interacts with LSM12. In terms of processing, N-glycosylated. Widely expressed. Highly expressed in macrophages. Expressed in pigmented cells.

The protein resides in the late endosome membrane. It localises to the lysosome membrane. The protein localises to the melanosome membrane. It catalyses the reaction Ca(2+)(in) = Ca(2+)(out). The catalysed reaction is Na(+)(in) = Na(+)(out). Its activity is regulated as follows. Regulated by Mg(2+) ions, cytosolic Mg(2+) selectively inhibits outward current while lysosomal Mg(2+) modestly inhibits both the outward and inward currents. In the absence of Mg(2+), NAADP readily activates TPCN2, with properties similar to PI(3,5)P2. Na(+) current is inhibited by ATP in a MTORC-dependent manner. ATP sensitivity is independent of PI(3,5)P2. Both current elicited by PI(3,5)P2 as well as NAADP are inhibited by tetrandrine. Its function is as follows. Intracellular channel initially characterized as a non-selective Ca(2+)-permeable channel activated by NAADP (nicotinic acid adenine dinucleotide phosphate), it is also a highly-selective Na(+) channel activated directly by PI(3,5)P2 (phosphatidylinositol 3,5-bisphosphate). Localizes to the lysosomal and late endosome membranes where it regulates organellar membrane excitability, membrane trafficking, and pH homeostasis. Is associated with a plethora of physiological processes, including mTOR-dependent nutrient sensing, skin pigmentation and autophagy. Ion selectivity is not fixed but rather agonist-dependent and under defined ionic conditions, can be readily activated by both NAADP and PI(3,5)P2. As calcium channel, it increases the pH in the lysosomal lumen, as sodium channel, it promotes lysosomal exocytosis. Plays a crucial role in endolysosomal trafficking in the endolysosomal degradation pathway and is potentially involved in the homeostatic control of many macromolecules and cell metabolites. Also expressed in melanosomes of pigmented cells where mediates a Ca(2+) channel and/or PI(3,5)P2-activated melanosomal Na(+) channel to acidify pH and inhibit tyrosinase activity required for melanogenesis and pigmentation. Unlike the voltage-dependent TPCN1, TPCN2 is voltage independent and can be activated solely by PI(3,5)P2 binding. In contrast, PI(4,5)P2, PI(3,4)P2, PI(3)P and PI(5)P have no obvious effect on channel activation. Functionally, (Microbial infection) During Ebola virus (EBOV) infection, controls the movement of endosomes containing virus particles and is required by EBOV to escape from the endosomal network into the cell cytoplasm. This chain is Two pore channel protein 2, found in Mus musculus (Mouse).